Consider the following 757-residue polypeptide: Large ribosomal subunit protein mL102 (rPPR5) (757 aa).

Residues 39–55 (EETQTPANANPETQSPD) show a composition bias toward polar residues. Residues 39–82 (EETQTPANANPETQSPDAKSETKKNLTSTETRPLRERFQRGKRQ) form a disordered region. Basic and acidic residues predominate over residues 70-82 (RPLRERFQRGKRQ). 16 PPR repeats span residues 149–183 (DRDTHMKMIKMLGEVSKLNHARCILLDMPEKGVPW), 184–218 (DEDMFVVLIESYGKAGIVQESVKIFQKMKDLGVER), 219–253 (TIKSYNSLFKVILRRGRYMMAKRYFNKMVSEGVEP), 254–288 (TRHTYNLMLWGFFLSLRLETALRFFEDMKTRGISP), 289–323 (DDATFNTMINGFCRFKKMDEAEKLFVEMKGNKIGP), 324–358 (SVVSYTTMIKGYLAVDRVDDGLRIFEEMRSSGIEP), 359–393 (NATTYSTLLPGLCDAGKMVEAKNILKNMMAKHIAP), 395–429 (DNSIFLKLLVSQSKAGDMAAATEVLKAMATLNVPA), 430–464 (EAGHYGVLIENQCKASAYNRAIKLLDTLIEKEIIL), 473–507 (EPSAYNPIIEYLCNNGQTAKAEVLFRQLMKRGVQD), 510–541 (ALNNLIRGHAKEGNPDSSYEILKIMSRRGVPR), 542–576 (ESNAYELLIKSYMSKGEPGDAKTALDSMVEDGHVP), 577–611 (DSSLFRSVIESLFEDGRVQTASRVMMIMIDKNVGI), 614–648 (NMDLIAKILEALLMRGHVEEALGRIDLLNQNGHTA), 651–680 (DSLLSVLSEKGKTIAALKLLDFGLERDLSL), and 681–715 (EFSSYDKVLDALLGAGKTLNAYSVLCKIMEKGSST).

This sequence belongs to the PPR family. P subfamily. Component of the mitochondrial ribosome large subunit.

It is found in the mitochondrion. This chain is Large ribosomal subunit protein mL102 (rPPR5), found in Arabidopsis thaliana (Mouse-ear cress).